A 506-amino-acid polypeptide reads, in one-letter code: Acetaldehyde dehydrogenase (506 aa).

Catalysis depends on residues Glu-262 and Cys-301.

This sequence belongs to the aldehyde dehydrogenase family.

The catalysed reaction is acetaldehyde + NAD(+) + H2O = acetate + NADH + 2 H(+). Its pathway is alcohol metabolism; ethanol degradation; acetate from ethanol: step 2/2. In terms of biological role, catalyzes the NAD(+)-dependent oxidation of acetaldehyde to acetate. Is likely a component of the ethanol oxidation system that allows P.aeruginosa to grow on ethanol as the sole carbon and energy source. This is Acetaldehyde dehydrogenase from Pseudomonas aeruginosa.